The chain runs to 403 residues: Solanesyl-diphosphate synthase 2, chloroplastic (403 aa).

The N-terminal 62 residues, 1-62, are a transit peptide targeting the chloroplast; sequence MLSVSCPRVY…QPGLAAVDVP (62 aa). Residues Lys-123, Arg-126, and His-161 each contribute to the isopentenyl diphosphate site. Mg(2+) is bound by residues Asp-168 and Asp-172. Position 177 (Arg-177) interacts with an all-trans-polyprenyl diphosphate. Arg-178 serves as a coordination point for isopentenyl diphosphate. 4 residues coordinate an all-trans-polyprenyl diphosphate: Lys-254, Thr-255, Gln-292, and Lys-309.

Belongs to the FPP/GGPP synthase family. In terms of assembly, homodimer. Interacts with FBN5. Requires Mg(2+) as cofactor. In terms of tissue distribution, expressed in leaves, stems and roots. Highest expression in leaves and roots.

It localises to the plastid. The protein localises to the chloroplast. The enzyme catalyses 7 isopentenyl diphosphate + (2E)-geranyl diphosphate = all-trans-nonaprenyl diphosphate + 7 diphosphate. Involved in providing solanesyl diphosphate for plastoquinone-9 (PQ-9) formation. Geranyl diphosphate is the preferred substrate. The protein is Solanesyl-diphosphate synthase 2, chloroplastic of Oryza sativa subsp. japonica (Rice).